Reading from the N-terminus, the 157-residue chain is Class-10 pathogenesis-related protein 1 (157 aa).

It belongs to the BetVI family. Expressed in roots. Detected in nodules and leaves, but not in stems and flowers.

The protein is Class-10 pathogenesis-related protein 1 (PR10-1) of Medicago truncatula (Barrel medic).